The primary structure comprises 909 residues: Probable DNA-directed RNA polymerase subunit beta (909 aa).

Belongs to the RNA polymerase beta chain family.

It carries out the reaction RNA(n) + a ribonucleoside 5'-triphosphate = RNA(n+1) + diphosphate. Functionally, required for late and very late gene expression. May be a component of the novel RNA polymerase activity induced by baculovirus infection. In Lepidoptera (butterflies and moths), this protein is Probable DNA-directed RNA polymerase subunit beta (LEF-8).